A 2096-amino-acid chain; its full sequence is Tudor domain-containing protein 6 (2096 aa).

Residues A65–F120 enclose the Tudor 1 domain. The disordered stretch occupies residues Y287–P316. Polar residues predominate over residues R288–T302. T293 bears the Phosphothreonine mark. Tudor domains lie at P310 to M369, K536 to L593, H816 to V875, P1033 to V1088, P1352 to L1411, and C1567 to S1626. Phosphoserine occurs at positions 1722 and 2062. Residues A2026–S2084 enclose the Tudor 8 domain.

Found in a mRNP complex (i.e. messenger ribonucleoproteins which correspond to mRNA with bound proteins), at least composed of TDRD1, TDRD6, TDRD7 and DDX4. Found in a complex, at least composed of PIWIL1, PIWIL2, DDX4 and TDRD6. Interacts with Tex19.1 and probably Tex19.2. Interacts with PRMT5. Interacts with SNRPB (when methylated); to trigger spliceosome formation. Undergoes proteolytic cleavage near the C-terminal by an unknown protease during the transition from meiosis I to meiosis II in primary spermatocytes.

Its subcellular location is the cytoplasm. Tudor domain-containing protein involved in germ cell development, more specifically the formation of chromatoid body (during spermiogenesis), Balbiani body (during oogenesis), germ plasm (upon fertilization), and for proper miRNA expression and spliceosome maturation. Essential for RNA-dependent helicase UPF1 localization to chromatoid body, for UPF1-UPF2 and UPF1-DDX4 interactions which are required for mRNA degradation, using the extended 3' UTR-triggered nonsense-mediated mRNA decay (NMD) pathway. Involved in spliceosome maturation and mRNA splicing in prophase I spermatocytes through interaction with arginine N-methyltransferase PRMT5 and symmetrically arginine dimethylated SNRPB (small nuclear ribonucleoprotein-associated protein). The chain is Tudor domain-containing protein 6 from Homo sapiens (Human).